The chain runs to 224 residues: MAAAVPQRAWTVEQLRSEQLPKKDIIKFLQDHGSDSFLAEHKLLGNIKNVAKTANKDHLVTAYNHLFETKRFKGSENVTKVSEQVKNVKLNEDKPKETKSEETPDEGPPKYTKSVLKKGDKTNFPKKGDVVHCWYTGTLQDGTVFDTNIQTSSKKKKNAKPLSFKVGVGKVIRGWDEALLTMSKGEKARLEIEPEWAYGKKGQPDAKIPPNAKLIFEVELVDID.

The residue at position 2 (alanine 2) is an N-acetylalanine. Serine 36 carries the phosphoserine modification. Positions 87–119 are disordered; sequence NVKLNEDKPKETKSEETPDEGPPKYTKSVLKKG. Residues 89–102 show a composition bias toward basic and acidic residues; it reads KLNEDKPKETKSEE. At lysine 99 the chain carries N6-acetyllysine. Residues 128 to 224 enclose the PPIase FKBP-type domain; sequence GDVVHCWYTG…IFEVELVDID (97 aa). Serine 152 is modified (phosphoserine). N6-acetyllysine is present on lysine 170.

Belongs to the FKBP-type PPIase family.

Its subcellular location is the nucleus. The catalysed reaction is [protein]-peptidylproline (omega=180) = [protein]-peptidylproline (omega=0). With respect to regulation, inhibited preferentially by rapamycin over FK506. In terms of biological role, FK506- and rapamycin-binding proteins (FKBPs) constitute a family of receptors for the two immunosuppressants which inhibit T-cell proliferation by arresting two distinct cytoplasmic signal transmission pathways. PPIases accelerate the folding of proteins. The sequence is that of Peptidyl-prolyl cis-trans isomerase FKBP3 (FKBP3) from Oryctolagus cuniculus (Rabbit).